A 72-amino-acid polypeptide reads, in one-letter code: Translation initiation factor IF-1 (72 aa).

One can recognise an S1-like domain in the interval 1–72 (MAKEEPIEVE…TRGRIIYRTK (72 aa)).

This sequence belongs to the IF-1 family. As to quaternary structure, component of the 30S ribosomal translation pre-initiation complex which assembles on the 30S ribosome in the order IF-2 and IF-3, IF-1 and N-formylmethionyl-tRNA(fMet); mRNA recruitment can occur at any time during PIC assembly.

The protein resides in the cytoplasm. Functionally, one of the essential components for the initiation of protein synthesis. Stabilizes the binding of IF-2 and IF-3 on the 30S subunit to which N-formylmethionyl-tRNA(fMet) subsequently binds. Helps modulate mRNA selection, yielding the 30S pre-initiation complex (PIC). Upon addition of the 50S ribosomal subunit IF-1, IF-2 and IF-3 are released leaving the mature 70S translation initiation complex. The chain is Translation initiation factor IF-1 from Syntrophus aciditrophicus (strain SB).